Here is a 788-residue protein sequence, read N- to C-terminus: Endonuclease MutS2 (788 aa).

332-339 is a binding site for ATP; the sequence is GPNTGGKT. Residues 713 to 788 form the Smr domain; sequence VDLRGMDAEE…GTGVTVVELK (76 aa).

The protein belongs to the DNA mismatch repair MutS family. MutS2 subfamily. Homodimer. Binds to stalled ribosomes, contacting rRNA.

In terms of biological role, endonuclease that is involved in the suppression of homologous recombination and thus may have a key role in the control of bacterial genetic diversity. Functionally, acts as a ribosome collision sensor, splitting the ribosome into its 2 subunits. Detects stalled/collided 70S ribosomes which it binds and splits by an ATP-hydrolysis driven conformational change. Acts upstream of the ribosome quality control system (RQC), a ribosome-associated complex that mediates the extraction of incompletely synthesized nascent chains from stalled ribosomes and their subsequent degradation. Probably generates substrates for RQC. In Clostridium botulinum (strain ATCC 19397 / Type A), this protein is Endonuclease MutS2.